The chain runs to 898 residues: Fasciclin-2 (898 aa).

A signal peptide spans 1 to 22 (MRTVACAVLLACFMGCLAGAWA). At 23-764 (QSAGLEILPN…EDGSEGQMSS (742 aa)) the chain is on the extracellular side. Ig-like C2-type domains follow at residues 31 to 124 (PNSE…KQLS), 134 to 219 (PITW…RPIR), 226 to 316 (PQMS…VEVT), 321 to 423 (PRIG…GHLM), and 428 to 525 (PSFA…IMLR). Asn35, Asn51, Asn149, Asn192, Asn297, and Asn328 each carry an N-linked (GlcNAc...) asparagine glycan. The cysteines at positions 48 and 113 are disulfide-linked. Disulfide bonds link Cys156–Cys203 and Cys248–Cys300. An intrachain disulfide couples Cys343 to Cys407. 3 N-linked (GlcNAc...) asparagine glycosylation sites follow: Asn447, Asn457, and Asn580. A disulfide bridge connects residues Cys450 and Cys509. Fibronectin type-III domains are found at residues 532-626 (AVLQ…TPRI) and 644-745 (GTEN…VKDP). Residues 765-782 (AAIVVLVVAALLLALLVV) traverse the membrane as a helical segment. Residues 783–898 (DLVCCLVWRG…TSFVGKDSAV (116 aa)) lie on the Cytoplasmic side of the membrane.

The protein localises to the membrane. In terms of biological role, neuronal recognition molecule. Involved in a pathway recognition for axons during the development of nerve fascicles. This is Fasciclin-2 (FAS2) from Schistocerca americana (American grasshopper).